The primary structure comprises 234 residues: Leucyl/phenylalanyl-tRNA--protein transferase (234 aa).

This sequence belongs to the L/F-transferase family.

Its subcellular location is the cytoplasm. It carries out the reaction N-terminal L-lysyl-[protein] + L-leucyl-tRNA(Leu) = N-terminal L-leucyl-L-lysyl-[protein] + tRNA(Leu) + H(+). It catalyses the reaction N-terminal L-arginyl-[protein] + L-leucyl-tRNA(Leu) = N-terminal L-leucyl-L-arginyl-[protein] + tRNA(Leu) + H(+). The catalysed reaction is L-phenylalanyl-tRNA(Phe) + an N-terminal L-alpha-aminoacyl-[protein] = an N-terminal L-phenylalanyl-L-alpha-aminoacyl-[protein] + tRNA(Phe). In terms of biological role, functions in the N-end rule pathway of protein degradation where it conjugates Leu, Phe and, less efficiently, Met from aminoacyl-tRNAs to the N-termini of proteins containing an N-terminal arginine or lysine. This is Leucyl/phenylalanyl-tRNA--protein transferase from Salmonella paratyphi A (strain ATCC 9150 / SARB42).